Here is a 269-residue protein sequence, read N- to C-terminus: uncharacterized protein (269 aa).

This is an uncharacterized protein from Acanthamoeba polyphaga mimivirus (APMV).